The primary structure comprises 527 residues: Nucleus accumbens-associated protein 1 (527 aa).

The BTB domain occupies 30–94 (CDVSVVVKGH…CYTGRLSMNV (65 aa)). The interval 131 to 153 (QGLHAEEAPSSEPQSPVAQTSGW) is disordered. The span at 141 to 152 (SEPQSPVAQTSG) shows a compositional bias: polar residues. Lysine 167 participates in a covalent cross-link: Glycyl lysine isopeptide (Lys-Gly) (interchain with G-Cter in SUMO1); alternate. Lysine 167 participates in a covalent cross-link: Glycyl lysine isopeptide (Lys-Gly) (interchain with G-Cter in SUMO2); alternate. Lysine 183 is covalently cross-linked (Glycyl lysine isopeptide (Lys-Gly) (interchain with G-Cter in SUMO2)). The residue at position 188 (serine 188) is a Phosphoserine. Positions 210–292 (DLAANRPHQP…DEEEDGGEEG (83 aa)) are disordered. Residues 225 to 251 (APVVAAAQPAVAAGAGQPAGGVAAAGG) show a composition bias toward low complexity. The span at 255–277 (GPSTSERTSPGTSSAYTSDSPGS) shows a compositional bias: polar residues. Serine 259 is subject to Phosphoserine; by PKC. Residues 281-292 (EEDEEEDGGEEG) show a composition bias toward acidic residues. Glycyl lysine isopeptide (Lys-Gly) (interchain with G-Cter in SUMO2) cross-links involve residues lysine 318, lysine 452, lysine 480, lysine 483, and lysine 498. The 98-residue stretch at 374 to 471 (GTNVYITRAQ…DMCTNARRVV (98 aa)) folds into the BEN domain.

As to quaternary structure, homooligomer; mediated by the BTB domain. Interacts with HDAC3 and HDAC4. Interacts (via BTB domain) with CUL3, PSMD7 and RCOR1. In terms of tissue distribution, overexpressed in several types of carcinomas including ovarian serous carcinomas. Expression levels positively correlate with tumor recurrence in ovarian serous carcinomas, and intense immunoreactivity in primary ovarian tumors predicts early recurrence. Up-regulated in ovarian carcinomas after chemotherapy, suggesting a role in development of chemotherapy resistance in ovarian cancer.

The protein resides in the nucleus. Its subcellular location is the cytoplasm. Functionally, functions as a transcriptional repressor. Seems to function as a transcriptional corepressor in neuronal cells through recruitment of HDAC3 and HDAC4. Contributes to tumor progression, and tumor cell proliferation and survival. This may be mediated at least in part through repressing transcriptional activity of GADD45GIP1. Required for recruiting the proteasome from the nucleus to the cytoplasm and dendritic spines. This Homo sapiens (Human) protein is Nucleus accumbens-associated protein 1 (NACC1).